The following is a 204-amino-acid chain: ATP phosphoribosyltransferase (204 aa).

This sequence belongs to the ATP phosphoribosyltransferase family. Short subfamily. In terms of assembly, heteromultimer composed of HisG and HisZ subunits.

The protein localises to the cytoplasm. The enzyme catalyses 1-(5-phospho-beta-D-ribosyl)-ATP + diphosphate = 5-phospho-alpha-D-ribose 1-diphosphate + ATP. Its pathway is amino-acid biosynthesis; L-histidine biosynthesis; L-histidine from 5-phospho-alpha-D-ribose 1-diphosphate: step 1/9. Its function is as follows. Catalyzes the condensation of ATP and 5-phosphoribose 1-diphosphate to form N'-(5'-phosphoribosyl)-ATP (PR-ATP). Has a crucial role in the pathway because the rate of histidine biosynthesis seems to be controlled primarily by regulation of HisG enzymatic activity. The sequence is that of ATP phosphoribosyltransferase from Staphylococcus aureus (strain Mu3 / ATCC 700698).